Here is a 161-residue protein sequence, read N- to C-terminus: MQDAITSVINSADVQGKYLDGSAMDKLKAYFTTGALRVRAASTISANAAAIVKEAVAKSLLYSDVTRPGGNMYTTRRYAACIRDLDYYLRYATYAMLAGDPSILDERVLNGLKETYNSLGVPVGSTVQAIQAMKEVTAGLVGADAGREMGVYFDYICSGLS.

Residue asparagine 71 is modified to N4-methylasparagine. Cysteine 81 lines the (2R,3E)-phycocyanobilin pocket.

It belongs to the phycobiliprotein family. Heterodimer of an alpha and a beta chain. Post-translationally, contains one covalently linked phycocyanobilin chromophore. The chromophore is added by the phycocyanobilin lyase CpcUS.

Its subcellular location is the cellular thylakoid membrane. Functionally, light-harvesting photosynthetic bile pigment-protein from the phycobiliprotein complex. Allophycocyanin has a maximum absorption at approximately 650 nanometers. This Picosynechococcus sp. (strain ATCC 27264 / PCC 7002 / PR-6) (Agmenellum quadruplicatum) protein is Allophycocyanin beta subunit (apcB).